A 411-amino-acid chain; its full sequence is Lissencephaly-1 homolog (411 aa).

The LisH domain occupies 9 to 41 (QREELNQAIADYLGTNGYADSLEAFRKEADLST). The stretch at 56-83 (TSVIRLQKKVMELEAKLTEAEKEVIEGA) forms a coiled coil. WD repeat units lie at residues 106–147 (GHRA…RTLK), 148–187 (GHTDSVQDVAFDAQGKLLVSCSADLSIKLWDFQQSYECVK), 191–230 (GHDHNVSSVAFVPAGDYVLSASRDRTIKMWEVATGYCVKT), 233–272 (GHREWVRMVRVHIEGSIFATCSNDHTIRVWLTNSKDCKVE), 275–334 (DHEH…CLLT), 337–376 (GHDNWVRGLAFHPGGKYLVSASDDKTIRVWDLRNKRCMKT), and 379–411 (AHQHFCTSIDFHKAHPYVISGSVDQTVKVWECR).

The protein belongs to the WD repeat LIS1/nudF family.

The protein resides in the cytoplasm. It is found in the cytoskeleton. The protein localises to the microtubule organizing center. Its subcellular location is the centrosome. In terms of biological role, positively regulates the activity of the minus-end directed microtubule motor protein dynein. May enhance dynein-mediated microtubule sliding by targeting dynein to the microtubule plus end. Required for several dynein- and microtubule-dependent processes. The polypeptide is Lissencephaly-1 homolog (Drosophila grimshawi (Hawaiian fruit fly)).